Consider the following 184-residue polypeptide: Heme transporter hrg-4 (184 aa).

Residues 19–39 (IGWTIFGIVFGISAILTYAIK) traverse the membrane as a helical segment. N-linked (GlcNAc...) asparagine glycosylation occurs at asparagine 42. Transmembrane regions (helical) follow at residues 46-66 (TATT…YWAL), 87-107 (VFIG…AGIT), and 124-146 (IYFS…WSLV).

The protein belongs to the HRG family.

It localises to the cell membrane. In terms of biological role, heme transporter that mediates heme uptake across the plasma membrane. This chain is Heme transporter hrg-4, found in Caenorhabditis elegans.